The sequence spans 229 residues: Flagellar L-ring protein (229 aa).

The first 23 residues, 1-23, serve as a signal peptide directing secretion; it reads MNPLTRVALAVAAFAALVLALSA. A lipid anchor (N-palmitoyl cysteine) is attached at Cys24. The S-diacylglycerol cysteine moiety is linked to residue Cys24.

This sequence belongs to the FlgH family. As to quaternary structure, the basal body constitutes a major portion of the flagellar organelle and consists of four rings (L,P,S, and M) mounted on a central rod.

It localises to the cell outer membrane. It is found in the bacterial flagellum basal body. Assembles around the rod to form the L-ring and probably protects the motor/basal body from shearing forces during rotation. In Anaeromyxobacter sp. (strain K), this protein is Flagellar L-ring protein.